The chain runs to 249 residues: tRNA (guanine-N(1)-)-methyltransferase (249 aa).

S-adenosyl-L-methionine-binding positions include G113 and 133–138 (IGDFVV).

It belongs to the RNA methyltransferase TrmD family. Homodimer.

It localises to the cytoplasm. It catalyses the reaction guanosine(37) in tRNA + S-adenosyl-L-methionine = N(1)-methylguanosine(37) in tRNA + S-adenosyl-L-homocysteine + H(+). Specifically methylates guanosine-37 in various tRNAs. This Neisseria gonorrhoeae (strain ATCC 700825 / FA 1090) protein is tRNA (guanine-N(1)-)-methyltransferase.